Consider the following 353-residue polypeptide: GDSL esterase/lipase At5g03810 (353 aa).

The signal sequence occupies residues 1–24; sequence MKMFITMSMCLSVIACFYAGVGTG. Residue S37 is the Nucleophile of the active site. Residues N100, N255, N256, N260, and N320 are each glycosylated (N-linked (GlcNAc...) asparagine). Active-site residues include D328 and H331.

Belongs to the 'GDSL' lipolytic enzyme family.

The protein localises to the secreted. The chain is GDSL esterase/lipase At5g03810 from Arabidopsis thaliana (Mouse-ear cress).